We begin with the raw amino-acid sequence, 215 residues long: HTH-type transcriptional repressor FabR (215 aa).

Residues 10–70 enclose the HTH tetR-type domain; the sequence is KTRRSLVEAA…TMVDESGLML (61 aa). Positions 33–52 form a DNA-binding region, H-T-H motif; the sequence is SLREVAREAVIAPTSFYRHF.

As to quaternary structure, homodimer.

The protein localises to the cytoplasm. Its function is as follows. Represses the transcription of fabB, involved in unsaturated fatty acid (UFA) biosynthesis. By controlling UFA production, FabR directly influences the physical properties of the membrane bilayer. This is HTH-type transcriptional repressor FabR from Escherichia coli (strain K12 / MC4100 / BW2952).